The chain runs to 929 residues: uncharacterized protein (929 aa).

Residues 1–257 (MARKGKVNTL…SVLSSDDNDS (257 aa)) form a disordered region. A compositionally biased stretch (basic and acidic residues) spans 23 to 34 (KQLENKILHSYE). Composition is skewed to acidic residues over residues 35–50 (EESA…DNDE), 59–75 (SEDD…DEED), 107–117 (LNEEDDSDDSV), 133–144 (DENELVDLDTLL), and 188–220 (SESE…DGEN). A phosphoserine mark is found at Ser-251, Ser-555, and Ser-557. The tract at residues 602-729 (DEMQAFEDEL…KADKKNHKLK (128 aa)) is disordered. The segment covering 605-619 (QAFEDELAGVPNEDD) has biased composition (acidic residues). Basic and acidic residues predominate over residues 670 to 681 (NKPEMKEGQKKA). Over residues 696–711 (ETNPWLQVPDQRTSSA) the composition is skewed to polar residues. Positions 712–729 (KKLDKNSSKADKKNHKLK) are enriched in basic and acidic residues. Phosphoserine is present on residues Ser-758, Ser-760, and Ser-764. Basic and acidic residues predominate over residues 805-820 (KEDWVQEDAPKEEDHS). Residues 805-843 (KEDWVQEDAPKEEDHSLPGWGSWGGVGVKQRKTKPKVKK) form a disordered region. Basic residues predominate over residues 833 to 843 (KQRKTKPKVKK).

To yeast YML093w.

Its subcellular location is the nucleus. It localises to the nucleolus. This is an uncharacterized protein from Schizosaccharomyces pombe (strain 972 / ATCC 24843) (Fission yeast).